Reading from the N-terminus, the 351-residue chain is Tropomodulin-2 (351 aa).

Serine 25 carries the phosphoserine modification.

Belongs to the tropomodulin family. As to quaternary structure, binds to the N-terminus of tropomyosin and to actin. Binds to TMBr3 as well as to other low molecular mass tropomyosins (TM5a or TM5), but not to high molecular mass tropomyosins (TM2 or TMBr1). In terms of tissue distribution, neuronal-tissue specific.

The protein localises to the cytoplasm. The protein resides in the cytoskeleton. Its function is as follows. Blocks the elongation and depolymerization of the actin filaments at the pointed end. The Tmod/TM complex contributes to the formation of the short actin protofilament, which in turn defines the geometry of the membrane skeleton. The polypeptide is Tropomodulin-2 (Tmod2) (Rattus norvegicus (Rat)).